A 701-amino-acid chain; its full sequence is Glycine--tRNA ligase beta subunit (701 aa).

This sequence belongs to the class-II aminoacyl-tRNA synthetase family. Tetramer of two alpha and two beta subunits.

Its subcellular location is the cytoplasm. The catalysed reaction is tRNA(Gly) + glycine + ATP = glycyl-tRNA(Gly) + AMP + diphosphate. The polypeptide is Glycine--tRNA ligase beta subunit (Anaeromyxobacter sp. (strain K)).